The following is a 492-amino-acid chain: Argininosuccinate lyase (492 aa).

The protein belongs to the lyase 1 family. Argininosuccinate lyase subfamily.

The protein resides in the cytoplasm. It carries out the reaction 2-(N(omega)-L-arginino)succinate = fumarate + L-arginine. It participates in amino-acid biosynthesis; L-arginine biosynthesis; L-arginine from L-ornithine and carbamoyl phosphate: step 3/3. In Methanoculleus marisnigri (strain ATCC 35101 / DSM 1498 / JR1), this protein is Argininosuccinate lyase.